Here is a 223-residue protein sequence, read N- to C-terminus: UPF0173 metal-dependent hydrolase TV0864 (223 aa).

The protein belongs to the UPF0173 family.

This Thermoplasma volcanium (strain ATCC 51530 / DSM 4299 / JCM 9571 / NBRC 15438 / GSS1) protein is UPF0173 metal-dependent hydrolase TV0864.